A 165-amino-acid polypeptide reads, in one-letter code: uncharacterized protein (165 aa).

The segment at 1–36 is disordered; the sequence is MTRLCLPRPEAREDPIPVPPRGLGAGEGSGSPVRPP. The chain crosses the membrane as a helical span at residues 135-155; that stretch reads LLLLMGLGPLLRACGMPLTLL.

Its subcellular location is the membrane. This is an uncharacterized protein from Homo sapiens (Human).